The chain runs to 217 residues: Uridine kinase (217 aa).

17–24 lines the ATP pocket; that stretch reads GASASGKS.

Belongs to the uridine kinase family.

The protein localises to the cytoplasm. It carries out the reaction uridine + ATP = UMP + ADP + H(+). The catalysed reaction is cytidine + ATP = CMP + ADP + H(+). It functions in the pathway pyrimidine metabolism; CTP biosynthesis via salvage pathway; CTP from cytidine: step 1/3. Its pathway is pyrimidine metabolism; UMP biosynthesis via salvage pathway; UMP from uridine: step 1/1. In Haemophilus ducreyi (strain 35000HP / ATCC 700724), this protein is Uridine kinase.